The chain runs to 99 residues: Keratinocyte differentiation-associated protein (99 aa).

The signal sequence occupies residues 1–22; sequence MKIPVLPAVVLLSLLALHSAQG.

Highly expressed in skin, but not detectable in any other tissue examined. Expression restricted to cornified/stratified epithelia and not detected in non-cornified/stratified epithelia.

Its subcellular location is the secreted. Functionally, may act as a soluble regulator of keratinocyte differentiation. May play an important role in embryonic skin morphogenesis. The protein is Keratinocyte differentiation-associated protein of Canis lupus familiaris (Dog).